The primary structure comprises 384 residues: F-box/kelch-repeat protein At1g64840 (384 aa).

One can recognise an F-box domain in the interval 3 to 51; the sequence is PNWSQLPEELLNLISKNLDNCFDVVHARSICRSWRSAFPFPSSLSTLSY. Kelch repeat units lie at residues 87-137 and 259-309; these read PEYF…PLGF and NPFP…CCSA.

The sequence is that of F-box/kelch-repeat protein At1g64840 from Arabidopsis thaliana (Mouse-ear cress).